Here is a 479-residue protein sequence, read N- to C-terminus: Glutamate--tRNA ligase (479 aa).

A 'HIGH' region motif is present at residues 21–31 (PSPTGYLHVGG). The short motif at 248–252 (KLSKR) is the 'KMSKS' region element. Lys-251 serves as a coordination point for ATP.

It belongs to the class-I aminoacyl-tRNA synthetase family. Glutamate--tRNA ligase type 1 subfamily. In terms of assembly, monomer.

The protein localises to the cytoplasm. The catalysed reaction is tRNA(Glu) + L-glutamate + ATP = L-glutamyl-tRNA(Glu) + AMP + diphosphate. Catalyzes the attachment of glutamate to tRNA(Glu) in a two-step reaction: glutamate is first activated by ATP to form Glu-AMP and then transferred to the acceptor end of tRNA(Glu). This is Glutamate--tRNA ligase from Haemophilus ducreyi (strain 35000HP / ATCC 700724).